Here is a 293-residue protein sequence, read N- to C-terminus: NAD kinase (293 aa).

Residue Asp72 is the Proton acceptor of the active site. Residues 72–73 (DG), 146–147 (ND), Arg157, Arg174, Asp176, 187–192 (TAYALS), and Gln247 each bind NAD(+).

This sequence belongs to the NAD kinase family. A divalent metal cation serves as cofactor.

It localises to the cytoplasm. It carries out the reaction NAD(+) + ATP = ADP + NADP(+) + H(+). Its function is as follows. Involved in the regulation of the intracellular balance of NAD and NADP, and is a key enzyme in the biosynthesis of NADP. Catalyzes specifically the phosphorylation on 2'-hydroxyl of the adenosine moiety of NAD to yield NADP. This Teredinibacter turnerae (strain ATCC 39867 / T7901) protein is NAD kinase.